We begin with the raw amino-acid sequence, 117 residues long: Large ribosomal subunit protein bL20c (117 aa).

The protein belongs to the bacterial ribosomal protein bL20 family.

It is found in the plastid. The protein resides in the chloroplast. Its function is as follows. Binds directly to 23S ribosomal RNA and is necessary for the in vitro assembly process of the 50S ribosomal subunit. It is not involved in the protein synthesizing functions of that subunit. This chain is Large ribosomal subunit protein bL20c, found in Phalaenopsis aphrodite subsp. formosana (Moth orchid).